The primary structure comprises 493 residues: Glutamyl-tRNA(Gln) amidotransferase subunit A (493 aa).

Residues Lys78 and Ser158 each act as charge relay system in the active site. The active-site Acyl-ester intermediate is the Ser182.

The protein belongs to the amidase family. GatA subfamily. As to quaternary structure, heterotrimer of A, B and C subunits.

It catalyses the reaction L-glutamyl-tRNA(Gln) + L-glutamine + ATP + H2O = L-glutaminyl-tRNA(Gln) + L-glutamate + ADP + phosphate + H(+). Allows the formation of correctly charged Gln-tRNA(Gln) through the transamidation of misacylated Glu-tRNA(Gln) in organisms which lack glutaminyl-tRNA synthetase. The reaction takes place in the presence of glutamine and ATP through an activated gamma-phospho-Glu-tRNA(Gln). The protein is Glutamyl-tRNA(Gln) amidotransferase subunit A of Methylorubrum populi (strain ATCC BAA-705 / NCIMB 13946 / BJ001) (Methylobacterium populi).